We begin with the raw amino-acid sequence, 391 residues long: uncharacterized protein (391 aa).

12 helical membrane passes run 7–27 (FILVLLVSISGFSQGMLLPVI), 39–59 (AINGLHATGLYIGVLLASPFM), 66–88 (LGFKPLIVMGGSIVILSLFGFIW), 92–111 (VWVWFLLRLFIGIGDHMLHF), 131–151 (SIYGLSFGLGFAAGPFMVPLV), 156–176 (SLPFIVSGCISLFAWLFVFFL), 197–217 (FYQAMLFGWVAFMPTFGYGFL), 239–259 (VAIILPAFAIGSIIFQFPLGI), 269–289 (VLLVILLTGALCFFIAGVFPS), 292–312 (VIGGCFFIAGMAVGSTFTLGI), 329–349 (LLCGITFSLGSILGPVAGGWY), and 356–376 (ANLFYFITLTLSSVWLALVLG).

It belongs to the major facilitator superfamily.

It is found in the cell membrane. This is an uncharacterized protein from Bacillus subtilis (strain 168).